The chain runs to 177 residues: Inner membrane protein p22 (177 aa).

The Intravirion portion of the chain corresponds to 1–7; it reads MFNIKMT. Residues 8–28 form a helical membrane-spanning segment; that stretch reads ISVLLIALIVLLIIILVVFLY. Topologically, residues 29–177 are virion surface; the sequence is YKKQQPPKKV…IALPRNHKHA (149 aa).

Belongs to the asfivirus inner membrane protein p22 family.

Its subcellular location is the virion membrane. The protein resides in the host cell membrane. This is Inner membrane protein p22 from African swine fever virus (isolate Warthog/Namibia/Wart80/1980) (ASFV).